The chain runs to 171 residues: Peptide deformylase (171 aa).

Fe cation is bound by residues Cys94 and His136. Glu137 is an active-site residue. His140 is a Fe cation binding site.

Belongs to the polypeptide deformylase family. Requires Fe(2+) as cofactor.

The enzyme catalyses N-terminal N-formyl-L-methionyl-[peptide] + H2O = N-terminal L-methionyl-[peptide] + formate. Removes the formyl group from the N-terminal Met of newly synthesized proteins. Requires at least a dipeptide for an efficient rate of reaction. N-terminal L-methionine is a prerequisite for activity but the enzyme has broad specificity at other positions. This Afipia carboxidovorans (strain ATCC 49405 / DSM 1227 / KCTC 32145 / OM5) (Oligotropha carboxidovorans) protein is Peptide deformylase.